The sequence spans 418 residues: Outer membrane protein assembly factor BamB (418 aa).

A signal peptide spans 1 to 28 (MFHNTCGRKGRFARAMGMALAISVTLSG). Cysteine 29 carries N-palmitoyl cysteine lipidation. Cysteine 29 is lipidated: S-diacylglycerol cysteine.

This sequence belongs to the BamB family. Part of the Bam complex.

It localises to the cell outer membrane. Its function is as follows. Part of the outer membrane protein assembly complex, which is involved in assembly and insertion of beta-barrel proteins into the outer membrane. The polypeptide is Outer membrane protein assembly factor BamB (Alteromonas naphthalenivorans).